The chain runs to 122 residues: Large ribosomal subunit protein uL14c (122 aa).

Belongs to the universal ribosomal protein uL14 family. In terms of assembly, part of the 50S ribosomal subunit.

It localises to the plastid. The protein localises to the chloroplast. Binds to 23S rRNA. The polypeptide is Large ribosomal subunit protein uL14c (Daucus carota (Wild carrot)).